Consider the following 287-residue polypeptide: Elongation factor Ts (287 aa).

Residues 80 to 83 (TDFL) form an involved in Mg(2+) ion dislocation from EF-Tu region.

Belongs to the EF-Ts family.

The protein resides in the cytoplasm. Its function is as follows. Associates with the EF-Tu.GDP complex and induces the exchange of GDP to GTP. It remains bound to the aminoacyl-tRNA.EF-Tu.GTP complex up to the GTP hydrolysis stage on the ribosome. This is Elongation factor Ts from Stutzerimonas stutzeri (strain A1501) (Pseudomonas stutzeri).